The chain runs to 695 residues: Putative ATP-dependent DNA helicase R568 (695 aa).

Residues 86-499 form the UvrD-like helicase ATP-binding domain; it reads KFSEEQIKYI…FRNEEIFDSN (414 aa). An ATP-binding site is contributed by 107 to 114; it reads ACAGSGKT.

The protein belongs to the helicase family. UvrD subfamily.

The enzyme catalyses Couples ATP hydrolysis with the unwinding of duplex DNA by translocating in the 3'-5' direction.. It carries out the reaction ATP + H2O = ADP + phosphate + H(+). In terms of biological role, ATP-dependent DNA helicase. The sequence is that of Putative ATP-dependent DNA helicase R568 from Acanthamoeba polyphaga mimivirus (APMV).